The following is a 358-amino-acid chain: Putative pyruvyl transferase EpsI (358 aa).

This sequence belongs to the polysaccharide pyruvyl transferase family.

In terms of biological role, may be involved in the production of the exopolysaccharide (EPS) component of the extracellular matrix during biofilm formation. EPS is responsible for the adhesion of chains of cells into bundles. The sequence is that of Putative pyruvyl transferase EpsI (epsI) from Bacillus subtilis (strain 168).